Consider the following 688-residue polypeptide: Potassium-transporting ATPase ATP-binding subunit (688 aa).

Transmembrane regions (helical) follow at residues Pro34–Leu54, Ala62–Ala82, Val219–Leu239, and Val260–Ile280. Asp313 serves as the catalytic 4-aspartylphosphate intermediate. ATP-binding positions include Asp350, Glu354, Phe383–Ser390, and Lys401. Positions 524 and 528 each coordinate Mg(2+). Helical transmembrane passes span Phe594–Met614, Ala622–Leu642, and Ile662–Leu682.

It belongs to the cation transport ATPase (P-type) (TC 3.A.3) family. Type IA subfamily. The system is composed of three essential subunits: KdpA, KdpB and KdpC.

The protein localises to the cell inner membrane. The enzyme catalyses K(+)(out) + ATP + H2O = K(+)(in) + ADP + phosphate + H(+). Functionally, part of the high-affinity ATP-driven potassium transport (or Kdp) system, which catalyzes the hydrolysis of ATP coupled with the electrogenic transport of potassium into the cytoplasm. This subunit is responsible for energy coupling to the transport system and for the release of the potassium ions to the cytoplasm. The chain is Potassium-transporting ATPase ATP-binding subunit from Yersinia pseudotuberculosis serotype O:1b (strain IP 31758).